Consider the following 182-residue polypeptide: Ribosome-recycling factor (182 aa).

Positions Lys-137 to Gln-158 are disordered.

Belongs to the RRF family.

It localises to the cytoplasm. Its function is as follows. Responsible for the release of ribosomes from messenger RNA at the termination of protein biosynthesis. May increase the efficiency of translation by recycling ribosomes from one round of translation to another. In Prochlorococcus marinus (strain MIT 9211), this protein is Ribosome-recycling factor.